The chain runs to 1436 residues: DNA-directed RNA polymerase subunit beta' (1436 aa).

Positions 70, 72, 85, and 88 each coordinate Zn(2+). Mg(2+)-binding residues include aspartate 481, aspartate 483, and aspartate 485. Positions 829, 903, 910, and 913 each coordinate Zn(2+).

The protein belongs to the RNA polymerase beta' chain family. The RNAP catalytic core consists of 2 alpha, 1 beta, 1 beta' and 1 omega subunit. When a sigma factor is associated with the core the holoenzyme is formed, which can initiate transcription. Mg(2+) is required as a cofactor. The cofactor is Zn(2+).

It carries out the reaction RNA(n) + a ribonucleoside 5'-triphosphate = RNA(n+1) + diphosphate. Its function is as follows. DNA-dependent RNA polymerase catalyzes the transcription of DNA into RNA using the four ribonucleoside triphosphates as substrates. This chain is DNA-directed RNA polymerase subunit beta', found in Flavobacterium johnsoniae (strain ATCC 17061 / DSM 2064 / JCM 8514 / BCRC 14874 / CCUG 350202 / NBRC 14942 / NCIMB 11054 / UW101) (Cytophaga johnsonae).